A 514-amino-acid polypeptide reads, in one-letter code: Na(+)/H(+) antiporter NhaB (514 aa).

The next 11 membrane-spanning stretches (helical) occupy residues 21 to 41 (LAIV…SPFI), 43 to 63 (GWLL…CYPL), 88 to 108 (IMAN…IFFM), 143 to 163 (FLDA…FYGV), 203 to 223 (LMMH…VGEP), 239 to 259 (FFLR…LTCF), 304 to 324 (ALIA…VGLI), 349 to 369 (QESL…AVII), 390 to 410 (LALF…VFVA), 448 to 468 (ATPN…SPLI), and 484 to 504 (IVLS…ATIW).

Belongs to the NhaB Na(+)/H(+) (TC 2.A.34) antiporter family.

It is found in the cell inner membrane. It carries out the reaction 2 Na(+)(in) + 3 H(+)(out) = 2 Na(+)(out) + 3 H(+)(in). In terms of biological role, na(+)/H(+) antiporter that extrudes sodium in exchange for external protons. In Haemophilus influenzae (strain 86-028NP), this protein is Na(+)/H(+) antiporter NhaB.